A 339-amino-acid chain; its full sequence is Anthranilate phosphoribosyltransferase (339 aa).

5-phospho-alpha-D-ribose 1-diphosphate-binding positions include Gly80, 83-84, Thr88, 90-93, 108-116, and Ser120; these read GD, NIST, and KHGNRAMSS. Residue Gly80 participates in anthranilate binding. Position 92 (Ser92) interacts with Mg(2+). An anthranilate-binding site is contributed by Asn111. Anthranilate is bound at residue Arg166. Residues Asp225 and Glu226 each coordinate Mg(2+).

This sequence belongs to the anthranilate phosphoribosyltransferase family. Homodimer. It depends on Mg(2+) as a cofactor.

The enzyme catalyses N-(5-phospho-beta-D-ribosyl)anthranilate + diphosphate = 5-phospho-alpha-D-ribose 1-diphosphate + anthranilate. It participates in amino-acid biosynthesis; L-tryptophan biosynthesis; L-tryptophan from chorismate: step 2/5. Its function is as follows. Catalyzes the transfer of the phosphoribosyl group of 5-phosphorylribose-1-pyrophosphate (PRPP) to anthranilate to yield N-(5'-phosphoribosyl)-anthranilate (PRA). In Chloroflexus aurantiacus (strain ATCC 29366 / DSM 635 / J-10-fl), this protein is Anthranilate phosphoribosyltransferase.